A 558-amino-acid polypeptide reads, in one-letter code: MNAPVPVPRVADFTCEKKPATGSRGMVVTNHPLASAAGAQILLAGGNAIDAAVASLFALTVAEPMMVGILGGGLSHIRLADGRHVVIDNLSTAPGKATADMYECLSDEIGKQRDTRDRENVVGAKAVAVPGALKGWCEALARFGTLPLAEVLQPAIGLAERGFVVTPYLSNCITDNAADLARDPGLAAMLLPGGQPLQPGMRLIQSDYAASLKLIAAEGPEALYGGKLGRALTDYMAANGGLIDQADLSNYRIELREPIRGSYRGYEIIGPPPPSSSGVHIAQMLNILEGYDIGALGFGSTDAVHLLAEALKIAFADRAVATADPAFVKVPVARLIDKAYADERRALIAMEQAKSWTAGLSGGESADTTHVTVADAMGNVVSATQTINGLFGACVQTPGTGMIANNYMYNFDPHPGRALSIAPGKRVFTSMAPMMAVKEGRLAFALGLPGALRIFPSALQAIVNLIDHRMSLQEAVEAPRVWTEGGVLELEEAIPESVAQALIARGHKVVRSPRVAGGMNAIAFNPDGTLTGAACWRADGTPVAISGGLARAGARFTI.

The active-site Nucleophile is Thr-368.

This sequence belongs to the gamma-glutamyltransferase family. As to quaternary structure, dimer of two non-identical chains processed from the same precursor.

The enzyme catalyses (7R)-7-(4-carboxybutanamido)cephalosporanate + H2O = (7R)-7-aminocephalosporanate + glutarate. The catalysed reaction is an N-terminal (5-L-glutamyl)-[peptide] + an alpha-amino acid = 5-L-glutamyl amino acid + an N-terminal L-alpha-aminoacyl-[peptide]. It catalyses the reaction glutathione + H2O = L-cysteinylglycine + L-glutamate. It carries out the reaction an S-substituted glutathione + H2O = an S-substituted L-cysteinylglycine + L-glutamate. Besides the cephalosporin acylase I activity which converts GL-7ACA into 7-ACA; this enzyme displays some gamma glutamyltranspeptidase activity. This Pseudomonas sp. (strain V22) protein is Acylase ACY 1 proenzyme (acyI).